A 148-amino-acid chain; its full sequence is Large ribosomal subunit protein uL15 (148 aa).

The disordered stretch occupies residues 1-51 (MNLSNLKPAEGSTKTRKRIGRGPGSGLGGTSTRGHKGAKSRSGYKNKIGFE). Gly residues predominate over residues 21-31 (RGPGSGLGGTS). A compositionally biased stretch (basic residues) spans 33–44 (RGHKGAKSRSGY).

This sequence belongs to the universal ribosomal protein uL15 family. In terms of assembly, part of the 50S ribosomal subunit.

Binds to the 23S rRNA. The polypeptide is Large ribosomal subunit protein uL15 (Parabacteroides distasonis (strain ATCC 8503 / DSM 20701 / CIP 104284 / JCM 5825 / NCTC 11152)).